Reading from the N-terminus, the 64-residue chain is Temporin-ALh (64 aa).

Positions 1 to 22 (MFPLKKSLLLLFFLATINLSLC) are cleaved as a signal peptide. Residues 23 to 46 (EQERNAEEERRDEPDERNAEVEKR) constitute a propeptide that is removed on maturation. At Ser62 the chain carries Serine amide.

The protein belongs to the frog skin active peptide (FSAP) family. Temporin subfamily. Expressed by the skin glands.

It localises to the secreted. Functionally, antimicrobial peptide with activity against Gram-positive and Gram-negative bacteria and against fungi. Has been tested against S.aureus (MIC=2.5 ug/mL), B.pumilus (MIC=7.5 ug/mL), B.cereus (MIC=75.0 ug/mL), E.coli (MIC=5.0 ug/mL), B.dysenteriae (MIC=20.0 ug/mL), A.cacoaceticus (MIC=60.0 ug/mL), P.aeruginosa (MIC=2.5 ug/mL) and C.albicans (MIC=2.5 ug/mL). Also shows a weak hemolytic activity. The chain is Temporin-ALh from Amolops loloensis (Lolokou Sucker Frog).